We begin with the raw amino-acid sequence, 38 residues long: Large ribosomal subunit protein bL36 (38 aa).

The protein belongs to the bacterial ribosomal protein bL36 family.

The sequence is that of Large ribosomal subunit protein bL36 from Hamiltonella defensa subsp. Acyrthosiphon pisum (strain 5AT).